The primary structure comprises 230 residues: 5'-methylthioadenosine/S-adenosylhomocysteine nucleosidase (230 aa).

Glutamate 12 acts as the Proton acceptor in catalysis. Substrate contacts are provided by residues glycine 78, isoleucine 153, and 174–175 (ME). Catalysis depends on aspartate 198, which acts as the Proton donor.

The protein belongs to the PNP/UDP phosphorylase family. MtnN subfamily.

The catalysed reaction is S-adenosyl-L-homocysteine + H2O = S-(5-deoxy-D-ribos-5-yl)-L-homocysteine + adenine. It carries out the reaction S-methyl-5'-thioadenosine + H2O = 5-(methylsulfanyl)-D-ribose + adenine. It catalyses the reaction 5'-deoxyadenosine + H2O = 5-deoxy-D-ribose + adenine. The protein operates within amino-acid biosynthesis; L-methionine biosynthesis via salvage pathway; S-methyl-5-thio-alpha-D-ribose 1-phosphate from S-methyl-5'-thioadenosine (hydrolase route): step 1/2. In terms of biological role, catalyzes the irreversible cleavage of the glycosidic bond in both 5'-methylthioadenosine (MTA) and S-adenosylhomocysteine (SAH/AdoHcy) to adenine and the corresponding thioribose, 5'-methylthioribose and S-ribosylhomocysteine, respectively. Also cleaves 5'-deoxyadenosine, a toxic by-product of radical S-adenosylmethionine (SAM) enzymes, into 5-deoxyribose and adenine. This is 5'-methylthioadenosine/S-adenosylhomocysteine nucleosidase from Shewanella frigidimarina (strain NCIMB 400).